We begin with the raw amino-acid sequence, 348 residues long: Probable dual-specificity RNA methyltransferase RlmN (348 aa).

The active-site Proton acceptor is the Glu-92. Residues 98 to 331 (HPDRVTACIS…NEIRREKGTD (234 aa)) form the Radical SAM core domain. A disulfide bond links Cys-105 and Cys-336. 3 residues coordinate [4Fe-4S] cluster: Cys-112, Cys-116, and Cys-119. S-adenosyl-L-methionine is bound by residues 159–160 (GE), Ser-191, 214–216 (SLH), and Asn-290. Catalysis depends on Cys-336, which acts as the S-methylcysteine intermediate.

This sequence belongs to the radical SAM superfamily. RlmN family. The cofactor is [4Fe-4S] cluster.

The protein resides in the cytoplasm. The catalysed reaction is adenosine(2503) in 23S rRNA + 2 reduced [2Fe-2S]-[ferredoxin] + 2 S-adenosyl-L-methionine = 2-methyladenosine(2503) in 23S rRNA + 5'-deoxyadenosine + L-methionine + 2 oxidized [2Fe-2S]-[ferredoxin] + S-adenosyl-L-homocysteine. The enzyme catalyses adenosine(37) in tRNA + 2 reduced [2Fe-2S]-[ferredoxin] + 2 S-adenosyl-L-methionine = 2-methyladenosine(37) in tRNA + 5'-deoxyadenosine + L-methionine + 2 oxidized [2Fe-2S]-[ferredoxin] + S-adenosyl-L-homocysteine. Functionally, specifically methylates position 2 of adenine 2503 in 23S rRNA and position 2 of adenine 37 in tRNAs. This Fervidobacterium nodosum (strain ATCC 35602 / DSM 5306 / Rt17-B1) protein is Probable dual-specificity RNA methyltransferase RlmN.